We begin with the raw amino-acid sequence, 274 residues long: Probable WRKY transcription factor 49 (274 aa).

Residues 108–173 (NSNGMCDDGY…YEGFHFHYTY (66 aa)) constitute a DNA-binding region (WRKY). A disordered region spans residues 188 to 228 (KTKIHKHNAQDMNKKSQTQEESKEAQLGELTNQNHPVNKAQ). Residues 193–222 (KHNAQDMNKKSQTQEESKEAQLGELTNQNH) are a coiled coil. The span at 195–213 (NAQDMNKKSQTQEESKEAQ) shows a compositional bias: basic and acidic residues. A compositionally biased stretch (polar residues) spans 216–228 (ELTNQNHPVNKAQ).

This sequence belongs to the WRKY group II-c family.

The protein resides in the nucleus. Functionally, transcription factor. Interacts specifically with the W box (5'-(T)TGAC[CT]-3'), a frequently occurring elicitor-responsive cis-acting element. This chain is Probable WRKY transcription factor 49 (WRKY49), found in Arabidopsis thaliana (Mouse-ear cress).